A 66-amino-acid polypeptide reads, in one-letter code: Large ribosomal subunit protein bL35 (66 aa).

Belongs to the bacterial ribosomal protein bL35 family.

The sequence is that of Large ribosomal subunit protein bL35 from Synechococcus sp. (strain ATCC 27144 / PCC 6301 / SAUG 1402/1) (Anacystis nidulans).